The following is a 612-amino-acid chain: Chaperone protein DnaK (612 aa).

Thr-174 carries the phosphothreonine; by autocatalysis modification. Residues 578-612 (GGQTGGATNTDSAGQGTTQDNVYEANYKVEDDDNK) form a disordered region. A compositionally biased stretch (polar residues) spans 586–598 (NTDSAGQGTTQDN).

This sequence belongs to the heat shock protein 70 family.

Its function is as follows. Acts as a chaperone. The polypeptide is Chaperone protein DnaK (Thermoanaerobacter sp. (strain X514)).